A 345-amino-acid chain; its full sequence is 3-hydroxy-5-methyl-1-naphthoate 3-O-methyltransferase (345 aa).

Asp-205 serves as a coordination point for S-adenosyl-L-methionine. Residue His-252 is the Proton acceptor of the active site.

It belongs to the class I-like SAM-binding methyltransferase superfamily. Cation-independent O-methyltransferase family.

It carries out the reaction 3-hydroxy-5-methyl-1-naphthoate + S-adenosyl-L-methionine = 3-methoxy-5-methyl-1-naphthoate + S-adenosyl-L-homocysteine + H(+). It participates in antibiotic biosynthesis. Its activity is regulated as follows. Inhibited by different divalent cations, such as Mg(2+), Mn(2+), Fe(2+), Cu(2+) and Zn(2+). Its function is as follows. O-methyltransferase that mediates the formation of 3-methoxy-5-methyl-1-naphthoate from 3-hydroxy-5-methyl-1-naphthoate in the biosynthesis of the antitumor antibiotic azinomycin B. In Streptomyces sahachiroi, this protein is 3-hydroxy-5-methyl-1-naphthoate 3-O-methyltransferase.